We begin with the raw amino-acid sequence, 100 residues long: Large ribosomal subunit protein bL28 (100 aa).

The interval 1–21 (MSRVCDITGQGKSFGNKVSHS) is disordered. A compositionally biased stretch (polar residues) spans 10–19 (QGKSFGNKVS).

Belongs to the bacterial ribosomal protein bL28 family.

This chain is Large ribosomal subunit protein bL28, found in Ehrlichia canis (strain Jake).